A 137-amino-acid chain; its full sequence is MPTINQLVRKPRKSKVEKSDSPALNKGYNSFKKTQTNVNSPQKRGVCTRVGTMTPKKPNSALRKYARVRLSNLIEVTAYIPGIGHNLQEHSVVLLRGGRVKDLPGVRYHIVRGALDTAGVNDRKQSRSKYGTKRPKA.

The interval 1–55 (MPTINQLVRKPRKSKVEKSDSPALNKGYNSFKKTQTNVNSPQKRGVCTRVGTMTP) is disordered. A compositionally biased stretch (polar residues) spans 27–42 (GYNSFKKTQTNVNSPQ). At Asp-102 the chain carries 3-methylthioaspartic acid.

The protein belongs to the universal ribosomal protein uS12 family. As to quaternary structure, part of the 30S ribosomal subunit. Contacts proteins S8 and S17. May interact with IF1 in the 30S initiation complex.

Its function is as follows. With S4 and S5 plays an important role in translational accuracy. Functionally, interacts with and stabilizes bases of the 16S rRNA that are involved in tRNA selection in the A site and with the mRNA backbone. Located at the interface of the 30S and 50S subunits, it traverses the body of the 30S subunit contacting proteins on the other side and probably holding the rRNA structure together. The combined cluster of proteins S8, S12 and S17 appears to hold together the shoulder and platform of the 30S subunit. The sequence is that of Small ribosomal subunit protein uS12 from Enterococcus faecalis (strain ATCC 700802 / V583).